The chain runs to 348 residues: Organic solute transporter alpha-like protein 3 (348 aa).

Residues 1 to 49 lie on the Extracellular side of the membrane; sequence MAKEHGAMRSVLNLIGSVMLPQDTSNCSDRHDTPSAPEFLSHLQPFQTV. A glycan (N-linked (GlcNAc...) asparagine) is linked at asparagine 26. Residues 50 to 70 traverse the membrane as a helical segment; sequence LLSIASFSTTIVLCLSLIHWF. Residues 71–84 lie on the Cytoplasmic side of the membrane; the sequence is YVYKYVSIEKRRNK. A helical transmembrane segment spans residues 85–105; that stretch reads LYWLIAVFPVACSCSFIAMCV. The Extracellular segment spans residues 106-109; that stretch reads PRTA. The chain crosses the membrane as a helical span at residues 110 to 130; the sequence is VILTCIGVLYYLMCLFVIVSL. Residues 131–180 lie on the Cytoplasmic side of the membrane; sequence ARHLFGGRESFSTCLQYDDRPIDFRSPPFCCIIPKLPTARSTEKNIRRLE. A helical transmembrane segment spans residues 181-201; the sequence is WCVLQAPIVRSIIIFLDVVAV. Over 202–213 the chain is Extracellular; it reads AEMREDATPYIR. A helical transmembrane segment spans residues 214 to 234; sequence YSDMASLCSLLLAIFGVHTLA. Over 235-240 the chain is Cytoplasmic; that stretch reads RVTSNK. The helical transmembrane segment at 241–261 threads the bilayer; sequence LSAYCFMSMFRLVDISLLFFS. At 262-291 the chain is on the extracellular side; the sequence is AQQPMIFQNVLLRFNLISCGPLLNAQENAY. The helical transmembrane segment at 292 to 312 threads the bilayer; it reads FVCNFIITCEMLLLSVLATWL. Topologically, residues 313–348 are cytoplasmic; the sequence is LAPRHNAMFDAYRPSMALSETTASLNETEQSMILDH.

This sequence belongs to the OST-alpha family.

The protein resides in the cell membrane. Functionally, probable transporter. The chain is Organic solute transporter alpha-like protein 3 (osta-3) from Caenorhabditis elegans.